We begin with the raw amino-acid sequence, 31 residues long: Toxin BmKK12 (31 aa).

A Pyrrolidone carboxylic acid modification is found at glutamine 1. Intrachain disulfides connect cysteine 4–cysteine 20, cysteine 10–cysteine 25, and cysteine 14–cysteine 27. Proline 31 is modified (proline amide).

This sequence belongs to the short scorpion toxin superfamily. Potassium channel inhibitor family. Alpha-KTx 17 subfamily. In terms of processing, the N-terminus is blocked. Expressed by the venom gland.

Its subcellular location is the secreted. Blocker of potassium channels (Kv). The sequence is that of Toxin BmKK12 from Olivierus martensii (Manchurian scorpion).